Here is a 491-residue protein sequence, read N- to C-terminus: UDP-N-acetylmuramate--L-alanine ligase (491 aa).

126–132 (GTHGKTT) is a binding site for ATP.

The protein belongs to the MurCDEF family.

Its subcellular location is the cytoplasm. The catalysed reaction is UDP-N-acetyl-alpha-D-muramate + L-alanine + ATP = UDP-N-acetyl-alpha-D-muramoyl-L-alanine + ADP + phosphate + H(+). Its pathway is cell wall biogenesis; peptidoglycan biosynthesis. Functionally, cell wall formation. The protein is UDP-N-acetylmuramate--L-alanine ligase of Salmonella gallinarum (strain 287/91 / NCTC 13346).